We begin with the raw amino-acid sequence, 164 residues long: Small ribosomal subunit protein uS3m (164 aa).

Residues 1–23 constitute a mitochondrion transit peptide; it reads MLRSIQHVEALSSRQISTTSMLL.

The protein belongs to the universal ribosomal protein uS3 family. In terms of assembly, component of the mitochondrial ribosome small subunit (28S) which comprises a 12S rRNA and about 30 distinct proteins.

Its subcellular location is the mitochondrion. In Caenorhabditis elegans, this protein is Small ribosomal subunit protein uS3m (mrps-24).